Consider the following 584-residue polypeptide: MQPVFSRFPYASKSGFISLASRGYAVSRNSGSSIKSNLRSKPRADTRWNTKAKPPVKNRKSNGKGDHRSHSRSDSRAKPSQEQTQQQFQYGEYGKLSEGDPKILERSKRLVSKINDFSQLKILPEVRDKLMEVISSESLLNKNLLDVKYNPKENNVQEFKKHLKPSPIQTTAIYQTSKTLMDPQLQVRLIAAETGSGKTMAYLIPLVDYLKRTEMENPSWETLKDKAIVRSIILLPTHELVEQVYQTVSKLEPALGMHTYKWDAGSSYKGFVEALKGRIDIMVTTPGKILSLFNISMVNRPDRILSQVKFLVMDEADTLLDKSWVEDSYSTIKHMQNLNHVLFCSATIPKEFQKTITRLFPTVGVIASPNLHKINHKNQIKLINADMAPYKGSKTKALAQILYSINRDNIDPGFEKRVVIFVNEKENVPLVATKLANQYGHDVVALTGNDSVEERLEKIKPFMDPPKKMTTRKSEKVTTENTVTMKIPNSNIVIEEIPEDNEAFVESTLKVLVTTDVLARGINFRGCRYVVLYDIPNTPVDLVHRVGRTGRMNQKGSVFIITGKRVKNWVKAIPSIVSKNVSIS.

A mitochondrion-targeting transit peptide spans 1–49 (MQPVFSRFPYASKSGFISLASRGYAVSRNSGSSIKSNLRSKPRADTRWN). A compositionally biased stretch (polar residues) spans 28 to 39 (RNSGSSIKSNLR). The tract at residues 28 to 92 (RNSGSSIKSN…QTQQQFQYGE (65 aa)) is disordered. Over residues 63-79 (GKGDHRSHSRSDSRAKP) the composition is skewed to basic and acidic residues. Residues 162–169 (HLKPSPIQ) carry the Q motif motif. Residues 179 to 366 (TLMDPQLQVR…TRLFPTVGVI (188 aa)) enclose the Helicase ATP-binding domain. ATP is bound at residue 192–199 (AETGSGKT). Residues 314 to 317 (DEAD) carry the DEAD box motif. The region spanning 397 to 584 (ALAQILYSIN…SIVSKNVSIS (188 aa)) is the Helicase C-terminal domain.

This sequence belongs to the DEAD box helicase family. MRH4 subfamily.

It is found in the mitochondrion. The catalysed reaction is ATP + H2O = ADP + phosphate + H(+). ATP-binding RNA helicase involved in mitochondrial RNA metabolism. Required for maintenance of mitochondrial DNA. The polypeptide is ATP-dependent RNA helicase MRH4, mitochondrial (MRH4) (Kluyveromyces lactis (strain ATCC 8585 / CBS 2359 / DSM 70799 / NBRC 1267 / NRRL Y-1140 / WM37) (Yeast)).